Reading from the N-terminus, the 494-residue chain is Lysine--tRNA ligase (494 aa).

Residues glutamate 407 and glutamate 414 each contribute to the Mg(2+) site.

The protein belongs to the class-II aminoacyl-tRNA synthetase family. Homodimer. Requires Mg(2+) as cofactor.

The protein resides in the cytoplasm. It catalyses the reaction tRNA(Lys) + L-lysine + ATP = L-lysyl-tRNA(Lys) + AMP + diphosphate. This chain is Lysine--tRNA ligase, found in Lactococcus lactis subsp. cremoris (strain SK11).